A 120-amino-acid chain; its full sequence is MKKQRLEGIGKEIMRVISKVLLEEVKNPKIKGLVSVTEVDVTEDLKFADTYFSILPPLKSDEKKYDHEEILEALNEIKGFLRKRVAEEVDIRYTPEIRVKLDNSMENAIKITKLLNDLKV.

Belongs to the RbfA family. As to quaternary structure, monomer. Binds 30S ribosomal subunits, but not 50S ribosomal subunits or 70S ribosomes.

The protein resides in the cytoplasm. One of several proteins that assist in the late maturation steps of the functional core of the 30S ribosomal subunit. Associates with free 30S ribosomal subunits (but not with 30S subunits that are part of 70S ribosomes or polysomes). Required for efficient processing of 16S rRNA. May interact with the 5'-terminal helix region of 16S rRNA. The polypeptide is Ribosome-binding factor A (Fusobacterium nucleatum subsp. nucleatum (strain ATCC 25586 / DSM 15643 / BCRC 10681 / CIP 101130 / JCM 8532 / KCTC 2640 / LMG 13131 / VPI 4355)).